We begin with the raw amino-acid sequence, 150 residues long: UPF0756 membrane protein ABAYE1440 (150 aa).

4 helical membrane-spanning segments follow: residues 1–21 (MLAQFDVNLVVLLVLLICGLL), 45–65 (FFPYIQAHGLNLGILILTIGV), 83–103 (FISFKSLVAIAIGLLVAWLGG), and 115–135 (VVAGLLIGTVAGVALLRGVPV).

It belongs to the UPF0756 family.

It localises to the cell membrane. The sequence is that of UPF0756 membrane protein ABAYE1440 from Acinetobacter baumannii (strain AYE).